The primary structure comprises 209 residues: Small ribosomal subunit protein uS4 (209 aa).

Residues 98-161 (TRLDNVVYRM…AKQLRVQEAL (64 aa)) enclose the S4 RNA-binding domain.

The protein belongs to the universal ribosomal protein uS4 family. In terms of assembly, part of the 30S ribosomal subunit. Contacts protein S5. The interaction surface between S4 and S5 is involved in control of translational fidelity.

Functionally, one of the primary rRNA binding proteins, it binds directly to 16S rRNA where it nucleates assembly of the body of the 30S subunit. With S5 and S12 plays an important role in translational accuracy. The polypeptide is Small ribosomal subunit protein uS4 (Stenotrophomonas maltophilia (strain R551-3)).